The following is a 619-amino-acid chain: DBH-like monooxygenase protein 2 (619 aa).

The first 21 residues, 1-21 (MACVLLFRLFLLLVLAAFSQG), serve as a signal peptide directing secretion. The Extracellular segment spans residues 22–594 (KRLGPTSPLR…LSGSNTATLR (573 aa)). In terms of domain architecture, DOMON spans 40–156 (RAVFLRWDFD…DTMRVLAAYG (117 aa)). The active site involves Y209. Disulfide bonds link C211-C261 and C248-C271. Cu cation contacts are provided by H241 and H242. Residue N250 is glycosylated (N-linked (GlcNAc...) asparagine). Positions 309, 390, and 392 each coordinate Cu cation. 2 disulfides stabilise this stretch: C366–C481 and C444–C466. The active site involves H390. The N-linked (GlcNAc...) asparagine glycan is linked to N405. M465 is a Cu cation binding site. N-linked (GlcNAc...) asparagine glycosylation occurs at N477. Residues 595 to 615 (PLPMIAVLFLQGSLSCLLAML) form a helical membrane-spanning segment. Residues 616 to 619 (QTGV) lie on the Cytoplasmic side of the membrane.

Belongs to the copper type II ascorbate-dependent monooxygenase family. The cofactor is Cu(2+). In terms of tissue distribution, expressed at low levels in thymus and testis.

The protein resides in the membrane. This chain is DBH-like monooxygenase protein 2 (Moxd2), found in Mus musculus (Mouse).